We begin with the raw amino-acid sequence, 191 residues long: Protein GrpE (191 aa).

The span at 1–10 shows a compositional bias: basic and acidic residues; it reads MNHEEQKVET. The disordered stretch occupies residues 1-28; the sequence is MNHEEQKVETMEQVEAQPVEPTDVDSEV.

It belongs to the GrpE family. In terms of assembly, homodimer.

The protein resides in the cytoplasm. In terms of biological role, participates actively in the response to hyperosmotic and heat shock by preventing the aggregation of stress-denatured proteins, in association with DnaK and GrpE. It is the nucleotide exchange factor for DnaK and may function as a thermosensor. Unfolded proteins bind initially to DnaJ; upon interaction with the DnaJ-bound protein, DnaK hydrolyzes its bound ATP, resulting in the formation of a stable complex. GrpE releases ADP from DnaK; ATP binding to DnaK triggers the release of the substrate protein, thus completing the reaction cycle. Several rounds of ATP-dependent interactions between DnaJ, DnaK and GrpE are required for fully efficient folding. The protein is Protein GrpE of Aeromonas salmonicida (strain A449).